We begin with the raw amino-acid sequence, 915 residues long: DNA (cytosine-5)-methyltransferase 2 (915 aa).

Residues 1-14 are compositionally biased toward low complexity; the sequence is MAPSSPSSARPTRA. The interval 1–171 is disordered; the sequence is MAPSSPSSAR…STAANKPEED (171 aa). A compositionally biased stretch (basic and acidic residues) spans 15 to 30; the sequence is SGRERSAMAEEIHQNQ. The span at 42–57 shows a compositional bias: basic residues; it reads AKRRRKAASSGKKPKP. The span at 71–80 shows a compositional bias: basic and acidic residues; it reads KKGETEKTEP. The segment covering 81–108 has biased composition (acidic residues); that stretch reads VVDDVCAEEPDEEELAMGEEEAEAEEQA. Positions 109–119 are enriched in low complexity; that stretch reads MQEVVAAVAAG. The 126-residue stretch at 188–313 folds into the BAH domain; the sequence is IVYCLGDDVY…VAYSTFANIS (126 aa). Positions 315 to 328 are enriched in polar residues; it reads ENGQSGSETASGIS. The disordered stretch occupies residues 315-338; sequence ENGQSGSETASGISSDDAGLETSS. The SAM-dependent MTase C5-type domain maps to 345–876; sequence ATLLDLYSGC…YCLGQAYLGE (532 aa). Positions 445-508 constitute a Chromo domain; the sequence is FVVQKLIGIR…EGRKRKILPL (64 aa). Cysteine 521 is a catalytic residue.

This sequence belongs to the class I-like SAM-binding methyltransferase superfamily. C5-methyltransferase family.

The protein resides in the nucleus. The catalysed reaction is a 2'-deoxycytidine in DNA + S-adenosyl-L-methionine = a 5-methyl-2'-deoxycytidine in DNA + S-adenosyl-L-homocysteine + H(+). May be involved in the CpXpG methylation and in gene silencing. In Zea mays (Maize), this protein is DNA (cytosine-5)-methyltransferase 2 (ZMET5).